We begin with the raw amino-acid sequence, 101 residues long: Small ribosomal subunit protein uS14 (101 aa).

It belongs to the universal ribosomal protein uS14 family. Part of the 30S ribosomal subunit. Contacts proteins S3 and S10.

Binds 16S rRNA, required for the assembly of 30S particles and may also be responsible for determining the conformation of the 16S rRNA at the A site. In Caulobacter vibrioides (strain ATCC 19089 / CIP 103742 / CB 15) (Caulobacter crescentus), this protein is Small ribosomal subunit protein uS14.